The sequence spans 630 residues: A-type voltage-gated potassium channel KCND2 (630 aa).

The Cytoplasmic segment spans residues 1–184 (MAAGVAAWLP…FENPHTSTMA (184 aa)). Positions 2 to 20 (AAGVAAWLPFARAAAIGWM) are interaction with KCNIP1, KCNIP2, and other family members. Thr38 is subject to Phosphothreonine. The interval 71–90 (ERDFFYHPETQQYFFDRDPD) is interaction with KCNIP1. Zn(2+)-binding residues include His105, Cys111, Cys132, and Cys133. A helical membrane pass occupies residues 185–206 (LVFYYVTGFFIAVSVIANVVET). Residues 207–226 (VPCGSSPGHIKELPCGERYA) lie on the Extracellular side of the membrane. Residues 227–249 (VAFFCLDTACVMIFTVEYLLRLA) form a helical membrane-spanning segment. Over 250 to 256 (AAPSRYR) the chain is Cytoplasmic. Residues 257–281 (FVRSVMSIIDVVAILPYYIGLVMTD) traverse the membrane as a helical segment. Residues 282–287 (NEDVSG) are Extracellular-facing. Residues 288 to 307 (AFVTLRVFRVFRIFKFSRHS) form a helical; Voltage-sensor membrane-spanning segment. Residues 308–321 (QGLRILGYTLKSCA) lie on the Cytoplasmic side of the membrane. The interval 308–321 (QGLRILGYTLKSCA) is S4-S5 linker. Residues 322–345 (SELGFLLFSLTMAIIIFATVMFYA) form a helical membrane-spanning segment. At 346–357 (EKGSSASKFTSI) the chain is on the extracellular side. Positions 358–369 (PAAFWYTIVTMT) form an intramembrane region, helical. K(+) contacts are provided by Thr370, Leu371, Gly372, and Tyr373. Residues 370–375 (TLGYGD) carry the Selectivity filter motif. Residues 370 to 377 (TLGYGDMV) lie within the membrane without spanning it. Topologically, residues 378–380 (PKT) are extracellular. The chain crosses the membrane as a helical span at residues 381–403 (IAGKIFGSICSLSGVLVIALPVP). The Cytoplasmic portion of the chain corresponds to 404–630 (VIVSNFSRIY…GGNIVRVSAL (227 aa)). Ser438 carries the phosphoserine modification. A required for dendritic targeting region spans residues 474-489 (FETQHHHLLHCLEKTT). The interval 474 to 630 (FETQHHHLLH…GGNIVRVSAL (157 aa)) is important for normal channel activation and inactivation, for interaction with KCNIP2, and probably other family members as well. Ser548, Ser552, Ser572, and Ser575 each carry phosphoserine. The disordered stretch occupies residues 600–630 (IPTPPVTTPEGDDRPESPEYSGGNIVRVSAL). 2 positions are modified to phosphothreonine: Thr602 and Thr607. Ser616 bears the Phosphoserine mark. A PDZ-binding motif is present at residues 627 to 630 (VSAL).

Belongs to the potassium channel family. D (Shal) (TC 1.A.1.2) subfamily. Kv4.2/KCND2 sub-subfamily. In terms of assembly, homotetramer or heterotetramer with KCND1 or KCND3. Associates with the regulatory subunits KCNIP2, KCNIP3 and KCNIP4. Interacts with the regulatory subunit KCNIP1; this interaction mediates the capture of both the N- and C-terminus of KCND2, preventing N-type inactivation and stabilizing the S6 conformation, thereby accelerating closed state inactivation and recovery. In vivo, probably exists as heteromeric complex containing variable proportions of KCND1, KCND2, KCND3, KCNIP1, KCNIP2, KCNIP3, KCNIP4, DPP6 and DPP10. The tetrameric channel can associate with up to four regulatory subunits, such as KCNIP2 or KCNIP4. Interaction with four KCNIP4 chains does not reduce interaction with DPP10. Interacts with DLG4 and NCS1/FREQ. Interacts with DLG1. Probably part of a complex consisting of KCNIP1, KCNIP2 isoform 3 and KCND2. Interacts with FLNA, FLNC and DPP10. Interacts (via S1 and S2 helices) with DPP6; this interaction stabilizes the conformation of the S1-S2 helices and facilitates S4 conformational change, including S4 sliding up and down, thereby accelerating activation, inactivation, and recovery. Phosphorylation at Ser-438 in response to MAPK activation is increased in stimulated dendrites. Interaction with KCNIP2 and DPP6 propomtes phosphorylation by PKA at Ser-552. Phosphorylation at Ser-552 has no effect on interaction with KCNIP3, but is required for the regulation of channel activity by KCNIP3. Phosphorylation at Ser-552 leads to KCND2 internalization. Phosphorylated by MAPK in response to signaling via the metabotropic glutamate receptor GRM5. Phosphorylation at Ser-616 is required for the down-regulation of neuronal A-type currents in response to signaling via GRM5. In terms of tissue distribution, detected in ovary, in corpus luteum and in granulosa and theca cells in the follicle (at protein level). Highly expressed throughout the brain. Detected in amygdala, caudate nucleus, cerebellum, hippocampus, substantia nigra and thalamus. Expression is not detectable or very low in heart, kidney, liver, lung, pancreas and skeletal muscle. Not detectable in human heart atrium.

It is found in the cell membrane. Its subcellular location is the cell projection. The protein localises to the dendrite. The protein resides in the synapse. It localises to the perikaryon. It is found in the postsynaptic cell membrane. Its subcellular location is the dendritic spine. The protein localises to the cell junction. The catalysed reaction is K(+)(in) = K(+)(out). Voltage-gated potassium channel that mediates transmembrane potassium transport in excitable membranes, primarily in the brain. Mediates the major part of the dendritic A-type current I(SA) in brain neurons. This current is activated at membrane potentials that are below the threshold for action potentials. It regulates neuronal excitability, prolongs the latency before the first spike in a series of action potentials, regulates the frequency of repetitive action potential firing, shortens the duration of action potentials and regulates the back-propagation of action potentials from the neuronal cell body to the dendrites. Contributes to the regulation of the circadian rhythm of action potential firing in suprachiasmatic nucleus neurons, which regulates the circadian rhythm of locomotor activity. Functions downstream of the metabotropic glutamate receptor GRM5 and plays a role in neuronal excitability and in nociception mediated by activation of GRM5. Mediates the transient outward current I(to) in rodent heart left ventricle apex cells, but not in human heart, where this current is mediated by another family member. Forms tetrameric potassium-selective channels through which potassium ions pass in accordance with their electrochemical gradient. The channel alternates between opened and closed conformations in response to the voltage difference across the membrane. Can form functional homotetrameric channels and heterotetrameric channels that contain variable proportions of KCND2 and KCND3; channel properties depend on the type of pore-forming alpha subunits that are part of the channel. In vivo, membranes probably contain a mixture of heteromeric potassium channel complexes. Interaction with specific isoforms of the regulatory subunits KCNIP1, KCNIP2, KCNIP3 or KCNIP4 strongly increases expression at the cell surface and thereby increases channel activity; it modulates the kinetics of channel activation and inactivation, shifts the threshold for channel activation to more negative voltage values, shifts the threshold for inactivation to less negative voltages and accelerates recovery after inactivation. Likewise, interaction with DPP6 or DPP10 promotes expression at the cell membrane and regulates both channel characteristics and activity. Upon depolarization, the channel goes from a resting closed state (C state) to an activated but non-conducting state (C* state), from there, the channel may either inactivate (I state) or open (O state). In Homo sapiens (Human), this protein is A-type voltage-gated potassium channel KCND2.